A 258-amino-acid chain; its full sequence is Glutamate racemase (258 aa).

Residues 11–12 and 43–44 contribute to the substrate site; these read DS and YG. Cysteine 74 acts as the Proton donor/acceptor in catalysis. 75 to 76 provides a ligand contact to substrate; that stretch reads NT. Cysteine 187 functions as the Proton donor/acceptor in the catalytic mechanism. 188–189 provides a ligand contact to substrate; that stretch reads TH.

The protein belongs to the aspartate/glutamate racemases family.

It carries out the reaction L-glutamate = D-glutamate. The protein operates within cell wall biogenesis; peptidoglycan biosynthesis. Functionally, provides the (R)-glutamate required for cell wall biosynthesis. The protein is Glutamate racemase of Bifidobacterium animalis subsp. lactis (strain AD011).